Consider the following 287-residue polypeptide: Fructose-1,6-bisphosphatase class 1 (287 aa).

4 residues coordinate Mg(2+): Glu-67, Asp-87, Leu-89, and Asp-90. Substrate contacts are provided by residues 90–93 (DGSS), Tyr-195, and Lys-225. Glu-231 contributes to the Mg(2+) binding site.

It belongs to the FBPase class 1 family. As to quaternary structure, homotetramer. The cofactor is Mg(2+).

It localises to the cytoplasm. The enzyme catalyses beta-D-fructose 1,6-bisphosphate + H2O = beta-D-fructose 6-phosphate + phosphate. It functions in the pathway carbohydrate biosynthesis; gluconeogenesis. This is Fructose-1,6-bisphosphatase class 1 from Halobacterium salinarum (strain ATCC 29341 / DSM 671 / R1).